The primary structure comprises 449 residues: Tubulin alpha chain (449 aa).

Residues Gln11, Glu71, Ser140, Gly144, Thr145, Thr179, Asn206, and Asn228 each coordinate GTP. Glu71 contacts Mg(2+). Glu254 is a catalytic residue.

It belongs to the tubulin family. Dimer of alpha and beta chains. A typical microtubule is a hollow water-filled tube with an outer diameter of 25 nm and an inner diameter of 15 nM. Alpha-beta heterodimers associate head-to-tail to form protofilaments running lengthwise along the microtubule wall with the beta-tubulin subunit facing the microtubule plus end conferring a structural polarity. Microtubules usually have 13 protofilaments but different protofilament numbers can be found in some organisms and specialized cells. Mg(2+) is required as a cofactor.

The protein localises to the cytoplasm. The protein resides in the cytoskeleton. It catalyses the reaction GTP + H2O = GDP + phosphate + H(+). Its function is as follows. Tubulin is the major constituent of microtubules, a cylinder consisting of laterally associated linear protofilaments composed of alpha- and beta-tubulin heterodimers. Microtubules grow by the addition of GTP-tubulin dimers to the microtubule end, where a stabilizing cap forms. Below the cap, tubulin dimers are in GDP-bound state, owing to GTPase activity of alpha-tubulin. This is Tubulin alpha chain (TUBA) from Sordaria macrospora (strain ATCC MYA-333 / DSM 997 / K(L3346) / K-hell).